The following is a 318-amino-acid chain: Ubiquinone biosynthesis protein COQ9, mitochondrial (318 aa).

The N-terminal 44 residues, 1-44 (MAAAAVSGALGRAGWRLLQLRCLPVARCRQALVPRAFHASAVGL), are a transit peptide targeting the mitochondrion. The short motif at 16 to 31 (RLLQLRCLPVARCRQA) is the SIFI-degron element. Residues 44–98 (LRSSDEQKQQPPNSFSQQHSETQGAEKPDPESSHSPPRYTDQGGEEEEDYESEEQ) form a disordered region. Residues 52 to 66 (QQPPNSFSQQHSETQ) show a composition bias toward polar residues. Residues 86–97 (GGEEEEDYESEE) are compositionally biased toward acidic residues. N6-acetyllysine is present on K175. R244 contributes to the a 1,2-diacylglycero-3-phosphoethanolamine binding site.

Belongs to the COQ9 family. As to quaternary structure, homodimer. Heterodimer; two heterodimers of COQ7:COQ9 come together on the same side of the lipid pseudo-bilayer and form a curved tetramer with a hydrophobic surface suitable for membrane interaction. These two tetramers assemble into a soluble octamer with a pseudo-bilayer of lipids captured within. Interacts with COQ7; this interaction allows ubiquinone (CoQ) isoprene intermediates presentation to COQ7 and facilitates the COQ7-mediated hydroxylase step. In terms of processing, in response to mitochondrial stress, the precursor protein is ubiquitinated by the SIFI complex in the cytoplasm before mitochondrial import, leading to its degradation. Within the SIFI complex, UBR4 initiates ubiquitin chain that are further elongated or branched by KCMF1.

It is found in the mitochondrion. It participates in cofactor biosynthesis; ubiquinone biosynthesis. Membrane-associated protein that warps the membrane surface to access and bind aromatic isoprenes with high specificity, including ubiquinone (CoQ) isoprene intermediates and presents them directly to COQ7, therefore facilitating the COQ7-mediated hydroxylase step. Participates in the biosynthesis of coenzyme Q, also named ubiquinone, an essential lipid-soluble electron transporter for aerobic cellular respiration. The sequence is that of Ubiquinone biosynthesis protein COQ9, mitochondrial from Homo sapiens (Human).